The primary structure comprises 385 residues: S-adenosylmethionine synthase (385 aa).

ATP is bound at residue histidine 15. Position 17 (aspartate 17) interacts with Mg(2+). Glutamate 43 contacts K(+). Residues glutamate 56 and glutamine 99 each coordinate L-methionine. Residues 99 to 109 are flexible loop; the sequence is QSVDIAQGVDR. Residues 164-166, 230-231, aspartate 239, 245-246, and lysine 266 contribute to the ATP site; these read DAK, RF, and RK. Aspartate 239 lines the L-methionine pocket. Residue lysine 270 coordinates L-methionine.

Belongs to the AdoMet synthase family. In terms of assembly, homotetramer; dimer of dimers. It depends on Mg(2+) as a cofactor. The cofactor is K(+).

The protein localises to the cytoplasm. It carries out the reaction L-methionine + ATP + H2O = S-adenosyl-L-methionine + phosphate + diphosphate. The protein operates within amino-acid biosynthesis; S-adenosyl-L-methionine biosynthesis; S-adenosyl-L-methionine from L-methionine: step 1/1. Functionally, catalyzes the formation of S-adenosylmethionine (AdoMet) from methionine and ATP. The overall synthetic reaction is composed of two sequential steps, AdoMet formation and the subsequent tripolyphosphate hydrolysis which occurs prior to release of AdoMet from the enzyme. This is S-adenosylmethionine synthase from Alkalilimnicola ehrlichii (strain ATCC BAA-1101 / DSM 17681 / MLHE-1).